Consider the following 89-residue polypeptide: uncharacterized protein (89 aa).

Residues 39–61 traverse the membrane as a helical segment; that stretch reads FVCFWSIWFWTGDISFSLLSMLV.

Its subcellular location is the membrane. This is an uncharacterized protein from Saccharomyces cerevisiae (strain ATCC 204508 / S288c) (Baker's yeast).